The primary structure comprises 473 residues: Hyaluronidase-2 (473 aa).

An N-terminal signal peptide occupies residues 1–20; it reads MRAGPGPTVTLALVLAVSWA. 2 disulfide bridges follow: Cys-47-Cys-340 and Cys-211-Cys-227. Asn-74 and Asn-103 each carry an N-linked (GlcNAc...) asparagine glycan. The Proton donor role is filled by Glu-135. Residue Asn-357 is glycosylated (N-linked (GlcNAc...) asparagine). In terms of domain architecture, EGF-like spans 361–439; that stretch reads ATQYCSRAQC…YLGWSGEQCQ (79 aa). 3 cysteine pairs are disulfide-bonded: Cys-365–Cys-376, Cys-370–Cys-427, and Cys-429–Cys-438. Residue Gly-448 is the site of GPI-anchor amidated glycine attachment. A propeptide spans 449-473 (removed in mature form); it reads ASEAWAGSHLTSLLALAALAFTWTL.

This sequence belongs to the glycosyl hydrolase 56 family. Interacts with MST1R. Widely expressed (at protein level).

The protein localises to the cell membrane. It carries out the reaction Random hydrolysis of (1-&gt;4)-linkages between N-acetyl-beta-D-glucosamine and D-glucuronate residues in hyaluronate.. Its function is as follows. Catalyzes hyaluronan degradation into small fragments that are endocytosed and degraded in lysosomes by HYAL1 and exoglycosidases. Essential for the breakdown of extracellular matrix hyaluronan. The protein is Hyaluronidase-2 (HYAL2) of Homo sapiens (Human).